Here is a 343-residue protein sequence, read N- to C-terminus: uncharacterized protein (343 aa).

This is an uncharacterized protein from Acanthamoeba polyphaga mimivirus (APMV).